We begin with the raw amino-acid sequence, 132 residues long: Small ribosomal subunit protein uS8 (132 aa).

It belongs to the universal ribosomal protein uS8 family. As to quaternary structure, part of the 30S ribosomal subunit. Contacts proteins S5 and S12.

In terms of biological role, one of the primary rRNA binding proteins, it binds directly to 16S rRNA central domain where it helps coordinate assembly of the platform of the 30S subunit. The protein is Small ribosomal subunit protein uS8 of Stenotrophomonas maltophilia (strain R551-3).